The chain runs to 445 residues: Exodeoxyribonuclease 7 large subunit (445 aa).

The protein belongs to the XseA family. As to quaternary structure, heterooligomer composed of large and small subunits.

Its subcellular location is the cytoplasm. The enzyme catalyses Exonucleolytic cleavage in either 5'- to 3'- or 3'- to 5'-direction to yield nucleoside 5'-phosphates.. Functionally, bidirectionally degrades single-stranded DNA into large acid-insoluble oligonucleotides, which are then degraded further into small acid-soluble oligonucleotides. The chain is Exodeoxyribonuclease 7 large subunit from Xanthomonas oryzae pv. oryzae (strain PXO99A).